Reading from the N-terminus, the 131-residue chain is Protein TIFY 5A (131 aa).

The short motif at 9–13 (LELRL) is the EAR element. Disordered regions lie at residues 14 to 44 (FPTS…EESQ) and 74 to 131 (REMK…HSRR). Low complexity predominate over residues 16–34 (TSYDSDSSDTTSVVESTSS). The region spanning 39 to 74 (PNEESQRITIFYNGKMCFSSDVTHLQARSIISIASR) is the Tify domain. Residues 79–100 (KSSSNGSDPPNKSTSFHHNQLP) are compositionally biased toward polar residues. The Jas signature appears at 105–127 (SMKKSLQSFLQKRKIRIQATSPY). Positions 106 to 113 (MKKSLQSF) match the Nuclear localization signal motif. Residues 122-131 (QATSPYHSRR) show a composition bias toward polar residues.

It belongs to the TIFY/JAZ family. In terms of assembly, interacts with TPL and weakly with COI1, but not with AFPH2/NINJA. Interacts with MYC2, MYB21, MYB24, TIFY10A/JAZ1, TIFY10B/JAZ2, TIFY6B/JAZ3, TIFY6A/JAZ4, TIFY11A/JAZ5, TIFY11B/JAZ6, TIFY7/JAZ9, TIFY9/JAZ10 and TIFY3B/JAZ12. Interacts with RHD6 and RSL1. (Microbial infection) Interacts with the pathogenic Pseudomonas syringae HopZ1a protein. (Microbial infection) Acetylated by Pseudomonas syringae HopZ1a. Post-translationally, ubiquitinated.

The protein resides in the nucleus. Its function is as follows. Repressor of jasmonate responses. Unable to associate strongly with COI1 in the presence of jasmonoyl-isoleucine (JA-Ile) and is therefore more resistant to JA-mediated-degradation than other TIFY/JAZ proteins. Repress gene expression through direct recruitment of the corepressor TOPLESS to cognate transcription factors. Interacts with and suppresses RHD6 and RSL1 transcription factor activities to negatively regulate jasmonate-stimulated root hair development. In Arabidopsis thaliana (Mouse-ear cress), this protein is Protein TIFY 5A.